Consider the following 286-residue polypeptide: UPF0725 protein At2g20620 (286 aa).

The disordered stretch occupies residues 1 to 49 (MVLETPVCSPIDKESSSDDVQLNKPPKKKRKLDVVYPPRDNTSSSSDVK).

The protein belongs to the UPF0725 (EMB2204) family.

The chain is UPF0725 protein At2g20620 from Arabidopsis thaliana (Mouse-ear cress).